Here is a 516-residue protein sequence, read N- to C-terminus: Coiled-coil domain-containing protein 82 (516 aa).

Basic residues predominate over residues 1 to 13 (MVHARRHETRKNS). The tract at residues 1–265 (MVHARRHETR…DYGDAENEDD (265 aa)) is disordered. Residues 38–62 (DSDEELDSDEEIGSDEDLDGGESID) are compositionally biased toward acidic residues. Residues 78–96 (IPEKETELNLIKVESERSN) are compositionally biased toward basic and acidic residues. Over residues 98 to 107 (KCHMNTSSSS) the composition is skewed to polar residues. Basic and acidic residues predominate over residues 113 to 135 (MNKTKHNDLPDDEAHPGQAEGHH). Ser170 and Ser194 each carry phosphoserine. Thr202 carries the phosphothreonine modification. Positions 204–232 (EKSPAARKREYHQKLQELCERSRQKQRHN) form a coiled coil. The span at 215–226 (HQKLQELCERSR) shows a compositional bias: basic and acidic residues. The span at 248–265 (TDEDEDDDDYGDAENEDD) shows a compositional bias: acidic residues. Ser301 carries the post-translational modification Phosphoserine.

This Rattus norvegicus (Rat) protein is Coiled-coil domain-containing protein 82 (Ccdc82).